An 883-amino-acid polypeptide reads, in one-letter code: Valine--tRNA ligase (883 aa).

The 'HIGH' region signature appears at 46 to 56 (PNVTGKLHLGH). The 'KMSKS' region motif lies at 520–524 (KMSKS). Lys523 serves as a coordination point for ATP. Residues 809-844 (LVDLLNVEEELARLEKELAKWQKELDMVGKKLSNER) adopt a coiled-coil conformation.

Belongs to the class-I aminoacyl-tRNA synthetase family. ValS type 1 subfamily. Monomer.

The protein resides in the cytoplasm. The enzyme catalyses tRNA(Val) + L-valine + ATP = L-valyl-tRNA(Val) + AMP + diphosphate. Catalyzes the attachment of valine to tRNA(Val). As ValRS can inadvertently accommodate and process structurally similar amino acids such as threonine, to avoid such errors, it has a 'posttransfer' editing activity that hydrolyzes mischarged Thr-tRNA(Val) in a tRNA-dependent manner. This chain is Valine--tRNA ligase, found in Streptococcus pneumoniae (strain ATCC BAA-255 / R6).